We begin with the raw amino-acid sequence, 224 residues long: UPF0441 protein ECA0329 (224 aa).

The segment at 180-224 (TALAPKPATTSTITRGGFGETVAKQNSMQRSSASSNSSSSRSMGG) is disordered. The span at 204-224 (QNSMQRSSASSNSSSSRSMGG) shows a compositional bias: low complexity.

Belongs to the UPF0441 family.

In Pectobacterium atrosepticum (strain SCRI 1043 / ATCC BAA-672) (Erwinia carotovora subsp. atroseptica), this protein is UPF0441 protein ECA0329.